Reading from the N-terminus, the 35-residue chain is Thrombin-like enzyme cerastobin (35 aa).

The 35-residue stretch at 1–35 (VIGGAKCNINEHRSIVLLYSSRLFGHTLINKEWVL) folds into the Peptidase S1 domain.

Belongs to the peptidase S1 family. Snake venom subfamily. In terms of assembly, monomer. In terms of tissue distribution, expressed by the venom gland.

It is found in the secreted. Inhibited by diisopropylfluorophosphate (DFP). In terms of biological role, thrombin-like snake venom serine protease, that cleaves both alpha-chain (FGA) and beta-chain (FGB) of fibrinogen. Partially degrades factor X (F10), and release bradykinin from kininogen (KNG). Potently induces platelet aggregation. Shows a proteolytic activity towards protein constituents of the platelets cytoskeleton. Hydrolyzes actin, actin-binding protein, and P235. Shows a preferential cleavage at Arg-|-Xaa bonds. The chain is Thrombin-like enzyme cerastobin from Cerastes vipera (Sahara sand viper).